The sequence spans 729 residues: Glycine--tRNA ligase (729 aa).

A mitochondrion-targeting transit peptide spans 1 to 33 (MPCLLPSLLRATRAALPLLSPPRVVAASASQRL). A WHEP-TRS domain is found at 53–109 (LLAPLRLAVRQQGDFVRKLKEDKAPQVDVDRAVAELKARKRVLEAKELALQPKDDIV). An N6-acetyllysine modification is found at Lys194. Position 289 (Glu289) interacts with glycine. Residues 321–323 (RNE) and 332–333 (RV) each bind ATP. A glycine-binding site is contributed by Glu340. A Phosphotyrosine modification is found at Tyr443. ATP is bound at residue 447 to 448 (EI). Lys491 is subject to N6-acetyllysine. 566-568 (EPS) lines the glycine pocket. An ATP-binding site is contributed by Arg573. Ser690 carries the phosphoserine modification. Thr726 carries the post-translational modification Phosphothreonine.

Belongs to the class-II aminoacyl-tRNA synthetase family. As to quaternary structure, homodimer.

The protein resides in the cytoplasm. It localises to the mitochondrion. The protein localises to the cell projection. Its subcellular location is the axon. It is found in the secreted. The protein resides in the extracellular exosome. It carries out the reaction tRNA(Gly) + glycine + ATP = glycyl-tRNA(Gly) + AMP + diphosphate. The enzyme catalyses 2 ATP + H(+) = P(1),P(4)-bis(5'-adenosyl) tetraphosphate + diphosphate. Catalyzes the ATP-dependent ligation of glycine to the 3'-end of its cognate tRNA, via the formation of an aminoacyl-adenylate intermediate (Gly-AMP). Also produces diadenosine tetraphosphate (Ap4A), a universal pleiotropic signaling molecule needed for cell regulation pathways, by direct condensation of 2 ATPs. Thereby, may play a special role in Ap4A homeostasis. The chain is Glycine--tRNA ligase (Gars1) from Mus musculus (Mouse).